The primary structure comprises 987 residues: Eukaryotic translation initiation factor 3 subunit A (987 aa).

The stretch at 93 to 122 (LHLATDKAEQARSQADALEEALDVDDLEAD) forms a coiled coil. The 198-residue stretch at 316-513 (LQLIASSVVL…GVVIFGNLGI (198 aa)) folds into the PCI domain. Coiled-coil stretches lie at residues 556-742 (TVEK…EKNR) and 797-858 (LKIE…REEL). Residues 808 to 859 (QEEEEARKQEEAERLKKVEAERKANLDKAFEKQRQREIELEEKSRREREELL) are compositionally biased toward basic and acidic residues. The tract at residues 808–987 (QEEEEARKQE…GSSRPRPTQR (180 aa)) is disordered. Low complexity predominate over residues 872–894 (PTVTPVGTTAPAAAAAAAGAPAA). 2 stretches are compositionally biased toward polar residues: residues 905–916 (TEVSGPSAPTSS) and 976–987 (TFGSSRPRPTQR).

The protein belongs to the eIF-3 subunit A family. As to quaternary structure, component of the eukaryotic translation initiation factor 3 (eIF-3) complex. Binds to the translation initiation factor TIF3H1.

The protein resides in the cytoplasm. RNA-binding component of the eukaryotic translation initiation factor 3 (eIF-3) complex, which is involved in protein synthesis of a specialized repertoire of mRNAs and, together with other initiation factors, stimulates binding of mRNA and methionyl-tRNAi to the 40S ribosome. The eIF-3 complex specifically targets and initiates translation of a subset of mRNAs involved in cell proliferation. This is Eukaryotic translation initiation factor 3 subunit A (TIF3A1) from Arabidopsis thaliana (Mouse-ear cress).